A 386-amino-acid polypeptide reads, in one-letter code: MPHTITTTDELAAYCARAATQPYVTVDTEFLRERTYFAQLCLVQVAMPGTDDTDAVLIDPLAEGLSLEPLYELFRNVNVVKVFHAARQDLEIFFVEGGLVPTPLFDTQVAAMVCGFGDQVGYETLVRRIAKANLDKSSRFTDWSRRPLSDAQKVYALADVTYLREIYEYLSAELARTDRTHWLEEELAQLTNADAYVVDPENAWKRLKLRSNSGRVVAIAQQLAAFRETYAQEKNVPRNRVLKDDALLELAGTKPKTVADLGKSRLLLRDARKGAIAEGLVAAVARGMSVPNSEIPKVQAGRDRSNLNPALADLLRVLLKAKAENAGVATKLIASSSDLDDIASGFTDGVWASGWRSEVFGADALRLLNGEVALAAKGQKVKIVEV.

Positions 3–174 constitute a 3'-5' exonuclease domain; that stretch reads HTITTTDELA…EIYEYLSAEL (172 aa). Positions 213-294 constitute an HRDC domain; it reads SGRVVAIAQQ…ARGMSVPNSE (82 aa).

Belongs to the RNase D family. A divalent metal cation is required as a cofactor.

It is found in the cytoplasm. The catalysed reaction is Exonucleolytic cleavage that removes extra residues from the 3'-terminus of tRNA to produce 5'-mononucleotides.. In terms of biological role, exonuclease involved in the 3' processing of various precursor tRNAs. Initiates hydrolysis at the 3'-terminus of an RNA molecule and releases 5'-mononucleotides. The protein is Ribonuclease D of Jannaschia sp. (strain CCS1).